The following is a 610-amino-acid chain: Elongation factor 4 (610 aa).

In terms of domain architecture, tr-type G spans 11–193 (EKIRNFSIIA…QIVEKVPAPT (183 aa)). Residues 23 to 28 (DHGKST) and 140 to 143 (NKID) each bind GTP.

This sequence belongs to the TRAFAC class translation factor GTPase superfamily. Classic translation factor GTPase family. LepA subfamily.

It localises to the cell membrane. The catalysed reaction is GTP + H2O = GDP + phosphate + H(+). Its function is as follows. Required for accurate and efficient protein synthesis under certain stress conditions. May act as a fidelity factor of the translation reaction, by catalyzing a one-codon backward translocation of tRNAs on improperly translocated ribosomes. Back-translocation proceeds from a post-translocation (POST) complex to a pre-translocation (PRE) complex, thus giving elongation factor G a second chance to translocate the tRNAs correctly. Binds to ribosomes in a GTP-dependent manner. The chain is Elongation factor 4 from Streptococcus suis (strain 98HAH33).